The following is a 1173-amino-acid chain: DNA-directed RNA polymerase subunit beta (1173 aa).

The segment at 1-23 (MEGSLLVASSTSNNETANTASTD) is disordered. Low complexity predominate over residues 8–22 (ASSTSNNETANTAST).

Belongs to the RNA polymerase beta chain family. The RNAP catalytic core consists of 2 alpha, 1 beta, 1 beta' and 1 omega subunit. When a sigma factor is associated with the core the holoenzyme is formed, which can initiate transcription.

The catalysed reaction is RNA(n) + a ribonucleoside 5'-triphosphate = RNA(n+1) + diphosphate. DNA-dependent RNA polymerase catalyzes the transcription of DNA into RNA using the four ribonucleoside triphosphates as substrates. The protein is DNA-directed RNA polymerase subunit beta of Paenarthrobacter aurescens (strain TC1).